Reading from the N-terminus, the 974-residue chain is Probable proton ATPase 1B (974 aa).

Residues 1–23 show a composition bias toward basic and acidic residues; that stretch reads MSSKKYELDAAAFEDKPESHSDA. Residues 1-61 are disordered; that stretch reads MSSKKYELDA…ATDLLPPSKG (61 aa). The next 4 helical transmembrane spans lie at 93-112, 118-137, 265-286, and 295-321; these read GLWG…EFAL, GAIL…YETI, VMLA…YLLA, and ALQF…TLAV. Asp-351 acts as the 4-aspartylphosphate intermediate in catalysis. 6 consecutive transmembrane segments (helical) span residues 631–651, 662–684, 698–712, 738–761, 813–840, and 869–887; these read AAAD…AMLV, FLTY…CFSL, FFHL…ITLL, VVFV…LWIG, FFFY…AASF, and VWIY…KVLA. Residues 952–974 are disordered; sequence REDTHVLNESTSPVNAFSPKVKK.

The protein belongs to the cation transport ATPase (P-type) (TC 3.A.3) family. Type IIIA subfamily.

It is found in the membrane. The catalysed reaction is ATP + H2O + H(+)(in) = ADP + phosphate + 2 H(+)(out). This Leishmania donovani protein is Probable proton ATPase 1B (H1B).